Reading from the N-terminus, the 744-residue chain is Catalase-peroxidase (744 aa).

The first 22 residues, 1 to 22, serve as a signal peptide directing secretion; the sequence is MSPRARRCTDRCARMSERSMNA. A cross-link (tryptophyl-tyrosyl-methioninium (Trp-Tyr) (with M-260)) is located at residues 114–234; sequence WHSAGTYRLA…LGATEMGLIY (121 aa). H115 functions as the Proton acceptor in the catalytic mechanism. The tryptophyl-tyrosyl-methioninium (Tyr-Met) (with W-114) cross-link spans 234–260; it reads YVNPEGPDRNGDPISAAKFIRETFARM. Residue H275 coordinates heme b.

This sequence belongs to the peroxidase family. Peroxidase/catalase subfamily. Homodimer or homotetramer. Heme b is required as a cofactor. In terms of processing, formation of the three residue Trp-Tyr-Met cross-link is important for the catalase, but not the peroxidase activity of the enzyme.

It carries out the reaction H2O2 + AH2 = A + 2 H2O. It catalyses the reaction 2 H2O2 = O2 + 2 H2O. Functionally, bifunctional enzyme with both catalase and broad-spectrum peroxidase activity. The protein is Catalase-peroxidase of Azorhizobium caulinodans (strain ATCC 43989 / DSM 5975 / JCM 20966 / LMG 6465 / NBRC 14845 / NCIMB 13405 / ORS 571).